A 160-amino-acid chain; its full sequence is GTP-dependent dephospho-CoA kinase (160 aa).

Positions 45, 46, 47, 59, 61, 108, and 130 each coordinate GTP.

It belongs to the GTP-dependent DPCK family.

The enzyme catalyses 3'-dephospho-CoA + GTP = GDP + CoA + H(+). It participates in cofactor biosynthesis; coenzyme A biosynthesis. In terms of biological role, catalyzes the GTP-dependent phosphorylation of the 3'-hydroxyl group of dephosphocoenzyme A to form coenzyme A (CoA). The sequence is that of GTP-dependent dephospho-CoA kinase from Staphylothermus marinus (strain ATCC 43588 / DSM 3639 / JCM 9404 / F1).